Reading from the N-terminus, the 163-residue chain is Nucleotide-binding protein Ava_2001 (163 aa).

Belongs to the YajQ family.

Nucleotide-binding protein. This chain is Nucleotide-binding protein Ava_2001, found in Trichormus variabilis (strain ATCC 29413 / PCC 7937) (Anabaena variabilis).